A 248-amino-acid chain; its full sequence is UPF0736 protein BC_1176 (248 aa).

This sequence belongs to the UPF0736 family.

The protein is UPF0736 protein BC_1176 of Bacillus cereus (strain ATCC 14579 / DSM 31 / CCUG 7414 / JCM 2152 / NBRC 15305 / NCIMB 9373 / NCTC 2599 / NRRL B-3711).